A 285-amino-acid chain; its full sequence is Tumor necrosis factor ligand superfamily member 13B (285 aa).

Residues 1 to 46 (MDDSTEREQSRLTSCLKKREEMKLKECVSILPRKESPSVRSSKDGK) lie on the Cytoplasmic side of the membrane. The chain crosses the membrane as a helical; Signal-anchor for type II membrane protein span at residues 47 to 67 (LLAATLLLALLSCCLTVVSFY). Residues 68–285 (QVAALQGDLA…VTFFGALKLL (218 aa)) lie on the Extracellular side of the membrane. The tract at residues 114–138 (IFEPPAPGEGNSSQNSRNKRAVQGP) is disordered. An N-linked (GlcNAc...) asparagine glycan is attached at N124. One can recognise a THD domain in the interval 145 to 284 (DCLQLIADSE…DVTFFGALKL (140 aa)). The cysteines at positions 232 and 245 are disulfide-linked. A glycan (N-linked (GlcNAc...) (high mannose) asparagine) is linked at N242.

It belongs to the tumor necrosis factor family. In terms of assembly, homotrimer. Isoform 2 heteromultimerizes with isoform 1, probably limiting the amount of functional isoform 1 on the cell surface. Isoform 3 is unlikely form trimers or bind to BAFF receptors. The soluble form derives from the membrane form by proteolytic processing. In terms of processing, isoform 2 is not efficiently shed from the membrane unlike isoform 1. Post-translationally, N-glycosylated. Abundantly expressed in peripheral blood Leukocytes and is specifically expressed in monocytes and macrophages. Also found in the spleen, lymph node, bone marrow, T-cells and dendritic cells. A lower expression seen in placenta, heart, lung, fetal liver, thymus, and pancreas. Isoform 2 is expressed in many myeloid cell lines.

It localises to the cell membrane. The protein localises to the secreted. Cytokine that binds to TNFRSF13B/TACI and TNFRSF17/BCMA. TNFSF13/APRIL binds to the same 2 receptors. Together, they form a 2 ligands -2 receptors pathway involved in the stimulation of B- and T-cell function and the regulation of humoral immunity. A third B-cell specific BAFF-receptor (BAFFR/BR3) promotes the survival of mature B-cells and the B-cell response. In terms of biological role, isoform 2 seems to inhibit isoform 1 secretion and bioactivity. Functionally, acts as a transcription factor for its own parent gene, in association with NF-kappa-B p50 subunit, at least in autoimmune and proliferative B-cell diseases. The presence of Delta4BAFF is essential for soluble BAFF release by IFNG/IFN-gamma-stimulated monocytes and for B-cell survival. It can directly or indirectly regulate the differential expression of a large number of genes involved in the innate immune response and the regulation of apoptosis. This Homo sapiens (Human) protein is Tumor necrosis factor ligand superfamily member 13B (TNFSF13B).